Consider the following 416-residue polypeptide: Inositol polyphosphate multikinase (416 aa).

A disordered region spans residues 1 to 38 (MATEPPSPLRVEAPGPPEMRTSPAIESTPEGTPQPAGG). A2 is subject to N-acetylalanine. S7 bears the Phosphoserine mark. K75 contributes to the ATP binding site. Residue R82 participates in substrate binding. Residues 131 to 133 (EDV) and D144 contribute to the ATP site. Residues K146, 160–167 (KIQQQVSK), and Q196 each bind substrate. Positions 320-330 (RHRKIYTKKHH) match the Nuclear localization signal motif. D385 lines the ATP pocket. H388 contacts substrate.

It belongs to the inositol phosphokinase (IPK) family. Mg(2+) is required as a cofactor. Ubiquitous, with the highest expression in skeletal muscle, liver, placenta, lung, peripheral blood leukocytes, kidney, spleen and colon.

The protein resides in the nucleus. It carries out the reaction 1D-myo-inositol 1,4,5-trisphosphate + 2 ATP = 1D-myo-inositol 1,3,4,5,6-pentakisphosphate + 2 ADP + 2 H(+). It catalyses the reaction 1D-myo-inositol 1,3,4,6-tetrakisphosphate + ATP = 1D-myo-inositol 1,3,4,5,6-pentakisphosphate + ADP + H(+). The enzyme catalyses 1-octadecanoyl-2-(5Z,8Z,11Z,14Z)-eicosatetraenoyl-sn-glycero-3-phospho-1D-myo-inositol 4,5-bisphosphate + ATP = 1-octadecanoyl-2-(5Z,8Z,11Z,14Z-eicosatetraenoyl)-sn-glycero-3-phospho-(1D-myo-inositol 3,4,5-triphosphate) + ADP + H(+). The catalysed reaction is a 1,2-diacyl-sn-glycero-3-phospho-(1D-myo-inositol-4,5-bisphosphate) + ATP = a 1,2-diacyl-sn-glycero-3-phospho-(1D-myo-inositol-3,4,5-trisphosphate) + ADP + H(+). It carries out the reaction 1D-myo-inositol 1,4,5,6-tetrakisphosphate + ATP = 1D-myo-inositol 1,3,4,5,6-pentakisphosphate + ADP + H(+). It functions in the pathway phospholipid metabolism; phosphatidylinositol metabolism. Inhibited by flavonoids that occupy the ATP-binding pocket. Inhibited by myricetin, quercetin, luteolin, kaempferol, isorhamnetin and diosmetin, and to a lesser degree by rhamnetin and apigenin. Functionally, inositol phosphate kinase with a broad substrate specificity. Phosphorylates inositol 1,4,5-trisphosphate (Ins(1,4,5)P3) first to inositol 1,3,4,5-tetrakisphosphate and then to inositol 1,3,4,5,6-pentakisphosphate (Ins(1,3,4,5,6)P5). Phosphorylates inositol 1,3,4,6-tetrakisphosphate (Ins(1,3,4,6)P4). Phosphorylates inositol 1,4,5,6-tetrakisphosphate (Ins(1,4,5,6)P4). Phosphorylates glycero-3-phospho-1D-myo-inositol 4,5-bisphosphate to glycero-3-phospho-1D-myo-inositol 3,4,5-trisphosphate. Plays an important role in MLKL-mediated necroptosis via its role in the biosynthesis of inositol pentakisphosphate (InsP5) and inositol hexakisphosphate (InsP6). Binding of these highly phosphorylated inositol phosphates to MLKL mediates the release of an N-terminal auto-inhibitory region, leading to activation of the kinase. Essential for activated phospho-MLKL to oligomerize and localize to the cell membrane during necroptosis. Required for normal embryonic development, probably via its role in the biosynthesis of inositol 1,3,4,5,6-pentakisphosphate (Ins(1,3,4,5,6)P5) and inositol hexakisphosphate (InsP6). This chain is Inositol polyphosphate multikinase (IPMK), found in Homo sapiens (Human).